The primary structure comprises 137 residues: Small ribosomal subunit protein uS12 (137 aa).

Residues 1-57 (MPTINQLVRKPRKSKVEKSKSPALNVGYNSHKKVQTNVSSPQKRGVATRVGTMTPKK) form a disordered region. At Asp-102 the chain carries 3-methylthioaspartic acid.

This sequence belongs to the universal ribosomal protein uS12 family. In terms of assembly, part of the 30S ribosomal subunit. Contacts proteins S8 and S17. May interact with IF1 in the 30S initiation complex.

In terms of biological role, with S4 and S5 plays an important role in translational accuracy. Its function is as follows. Interacts with and stabilizes bases of the 16S rRNA that are involved in tRNA selection in the A site and with the mRNA backbone. Located at the interface of the 30S and 50S subunits, it traverses the body of the 30S subunit contacting proteins on the other side and probably holding the rRNA structure together. The combined cluster of proteins S8, S12 and S17 appears to hold together the shoulder and platform of the 30S subunit. The chain is Small ribosomal subunit protein uS12 from Streptococcus pneumoniae serotype 2 (strain D39 / NCTC 7466).